Here is a 606-residue protein sequence, read N- to C-terminus: NADH-ubiquinone oxidoreductase chain 5 (606 aa).

16 helical membrane passes run 1–21, 38–58, 87–107, 114–134, 140–160, 171–191, 213–233, 241–261, 273–293, 301–320, 325–347, 366–386, 409–429, 457–477, 488–508, and 582–602; these read MNIFPSLMLTSLFTLTLPIIA, NIISFAFIISLIPTMMFIYSG, MIFVPVALFVTWSIMEFSIWY, ITQFFKYLLMFLITMMILVTA, LFIGWEGVGIMSFLLIGWWYG, AILYNRIGDIGFIMSMAWFLS, LMGLLLAATGKSAQFGLHPWL, TPVSALLHSSTMVVAGVFLLI, AQTLTLCLGAITTLFTAICAL, IIAFSTSSQLGLMIVTIGIN, AFLHICTHAFFKAMLFMCSGSII, MPFTATSLIIGSFALTGMPFL, LLMTLIATSLTAAYSTRMIFF, LLIGSIFAGFFISNNIYPTTT, LMALIVTILGFALALELSLAT, and GLIKLYFLSFLITLTLSLLLL.

Belongs to the complex I subunit 5 family. In terms of assembly, core subunit of respiratory chain NADH dehydrogenase (Complex I) which is composed of 45 different subunits.

The protein localises to the mitochondrion inner membrane. It catalyses the reaction a ubiquinone + NADH + 5 H(+)(in) = a ubiquinol + NAD(+) + 4 H(+)(out). In terms of biological role, core subunit of the mitochondrial membrane respiratory chain NADH dehydrogenase (Complex I) which catalyzes electron transfer from NADH through the respiratory chain, using ubiquinone as an electron acceptor. Essential for the catalytic activity and assembly of complex I. In Rhinoceros unicornis (Greater Indian rhinoceros), this protein is NADH-ubiquinone oxidoreductase chain 5 (MT-ND5).